The chain runs to 206 residues: Small ribosomal subunit protein uS4c (206 aa).

The S4 RNA-binding domain occupies 93–161 (MRLDNIVYRL…IEKNIELLDK (69 aa)).

This sequence belongs to the universal ribosomal protein uS4 family. In terms of assembly, part of the 30S ribosomal subunit. Contacts protein S5. The interaction surface between S4 and S5 is involved in control of translational fidelity.

The protein resides in the plastid. Functionally, one of the primary rRNA binding proteins, it binds directly to 16S rRNA where it nucleates assembly of the body of the 30S subunit. Its function is as follows. With S5 and S12 plays an important role in translational accuracy. This Euglena longa (Euglenophycean alga) protein is Small ribosomal subunit protein uS4c (rps4).